Consider the following 486-residue polypeptide: MSPQTETKASVGFKAGVKEYKLTYYTPEYETKDTDILAAFRVTPQPGVPPEEAGAAVAAESSTGTWTTVWTDGLTSLDRYKGRCYHIEPVPGEESQFIAYVAYPLDLFEEGSVTNMFTSIVGNVFGFKALAALRLEDLRIPPAYTKTFQGPPHGIQVERDKLNKYGRPLLGCTIKPKLGLSAKNYGRAVYECLRGGLDFTKDDENVNSQPFMRWRDRFLFCAEAIYKSQAETGEIKGHYLNATAGTCEEMIKRAVFARELGVPIVMHDYLTGGFTANTSLAHYCRDNGLLLHIHRAMHAVIDRQKNHGMHFRVLAKALRLSGGDHIHAGTVVGKLEGDRESTLGFVDLLRDDYVEKDRSRGIFFTQDWVSLPGVLPVASGGIHVWHMPALTEIFGDDSVLQFGGGTLGHPWGNAPGAVANRVALEACVQARNEGRDLAVEGNEIIREACKWSPELAAACEVWKEIRFNFPTIDTIDKLDPSVDKVA.

Positions 1 to 2 (MS) are excised as a propeptide. The substrate site is built by asparagine 123 and threonine 173. Lysine 175 (proton acceptor) is an active-site residue. Lysine 177 contributes to the substrate binding site. Residues lysine 201, aspartate 203, and glutamate 204 each contribute to the Mg(2+) site. Lysine 201 carries the N6-carboxylysine modification. Phosphoserine is present on serine 208. Histidine 294 serves as the catalytic Proton acceptor. Residues arginine 295 and histidine 327 each contribute to the substrate site. A Phosphothreonine modification is found at threonine 330. Serine 379 serves as a coordination point for substrate.

Belongs to the RuBisCO large chain family. Type I subfamily. As to quaternary structure, heterohexadecamer of 8 large chains and 8 small chains; disulfide-linked. The disulfide link is formed within the large subunit homodimers. It depends on Mg(2+) as a cofactor. Post-translationally, the disulfide bond which can form in the large chain dimeric partners within the hexadecamer appears to be associated with oxidative stress and protein turnover.

It is found in the plastid. The protein resides in the chloroplast. It carries out the reaction 2 (2R)-3-phosphoglycerate + 2 H(+) = D-ribulose 1,5-bisphosphate + CO2 + H2O. The catalysed reaction is D-ribulose 1,5-bisphosphate + O2 = 2-phosphoglycolate + (2R)-3-phosphoglycerate + 2 H(+). RuBisCO catalyzes two reactions: the carboxylation of D-ribulose 1,5-bisphosphate, the primary event in carbon dioxide fixation, as well as the oxidative fragmentation of the pentose substrate in the photorespiration process. Both reactions occur simultaneously and in competition at the same active site. This chain is Ribulose bisphosphate carboxylase large chain, found in Aethionema grandiflorum (Persian stone-cress).